The sequence spans 265 residues: uncharacterized protein (265 aa).

Residues His-7, His-9, Glu-95, His-131, His-156, and Asp-206 each coordinate a divalent metal cation.

The protein belongs to the metallo-dependent hydrolases superfamily. TatD-type hydrolase family. It depends on a divalent metal cation as a cofactor.

This is an uncharacterized protein from Buchnera aphidicola subsp. Baizongia pistaciae (strain Bp).